Reading from the N-terminus, the 235-residue chain is Purine nucleoside phosphorylase DeoD-type (235 aa).

Histidine 4 provides a ligand contact to a purine D-ribonucleoside. Residues glycine 20, arginine 24, arginine 43, and 87–90 (RVGT) each bind phosphate. Residues glutamate 162, 179-181 (EME), and 203-204 (SD) each bind a purine D-ribonucleoside. Aspartate 204 functions as the Proton donor in the catalytic mechanism.

Belongs to the PNP/UDP phosphorylase family. In terms of assembly, homohexamer; trimer of homodimers.

It carries out the reaction a purine D-ribonucleoside + phosphate = a purine nucleobase + alpha-D-ribose 1-phosphate. The catalysed reaction is a purine 2'-deoxy-D-ribonucleoside + phosphate = a purine nucleobase + 2-deoxy-alpha-D-ribose 1-phosphate. Catalyzes the reversible phosphorolytic breakdown of the N-glycosidic bond in the beta-(deoxy)ribonucleoside molecules, with the formation of the corresponding free purine bases and pentose-1-phosphate. This Bacillus cytotoxicus (strain DSM 22905 / CIP 110041 / 391-98 / NVH 391-98) protein is Purine nucleoside phosphorylase DeoD-type.